We begin with the raw amino-acid sequence, 215 residues long: uncharacterized protein (215 aa).

2 consecutive transmembrane segments (helical) span residues Val40–Leu60 and Leu72–Leu92.

Its subcellular location is the mitochondrion membrane. This is an uncharacterized protein from Arabidopsis thaliana (Mouse-ear cress).